A 151-amino-acid polypeptide reads, in one-letter code: Nucleoside diphosphate kinase (151 aa).

ATP contacts are provided by Lys-11, Phe-59, Arg-87, Thr-93, Arg-104, and Asn-114. His-117 acts as the Pros-phosphohistidine intermediate in catalysis.

This sequence belongs to the NDK family. As to quaternary structure, homotetramer. The cofactor is Mg(2+).

It is found in the cytoplasm. It catalyses the reaction a 2'-deoxyribonucleoside 5'-diphosphate + ATP = a 2'-deoxyribonucleoside 5'-triphosphate + ADP. The enzyme catalyses a ribonucleoside 5'-diphosphate + ATP = a ribonucleoside 5'-triphosphate + ADP. In terms of biological role, major role in the synthesis of nucleoside triphosphates other than ATP. The ATP gamma phosphate is transferred to the NDP beta phosphate via a ping-pong mechanism, using a phosphorylated active-site intermediate. This Prochlorococcus marinus (strain NATL2A) protein is Nucleoside diphosphate kinase.